The primary structure comprises 462 residues: Glycogen synthase 1 (462 aa).

Residue Arg-6 participates in ADP-alpha-D-glucose binding.

This sequence belongs to the glycosyltransferase 1 family. Bacterial/plant glycogen synthase subfamily.

It carries out the reaction [(1-&gt;4)-alpha-D-glucosyl](n) + ADP-alpha-D-glucose = [(1-&gt;4)-alpha-D-glucosyl](n+1) + ADP + H(+). The protein operates within glycan biosynthesis; glycogen biosynthesis. Its function is as follows. Synthesizes alpha-1,4-glucan chains using ADP-glucose. The chain is Glycogen synthase 1 from Bradyrhizobium diazoefficiens (strain JCM 10833 / BCRC 13528 / IAM 13628 / NBRC 14792 / USDA 110).